We begin with the raw amino-acid sequence, 292 residues long: Chondroitin proteoglycan 3 (292 aa).

Positions 1–17 (MRFVFIIALLLIGASLA) are cleaved as a signal peptide. Residues 28-103 (DVSASEDEFS…EGSGDTSPVV (76 aa)) form a disordered region. Residues 38–80 (GDSSGEISGESSGEASGEASGEASGEASGEASGESSGETSGES) are compositionally biased toward low complexity. The segment covering 81-96 (SGDEETSGEGSGEEGS) has biased composition (acidic residues). 2 N-linked (GlcNAc...) asparagine glycosylation sites follow: Asn174 and Asn254.

The polypeptide is Chondroitin proteoglycan 3 (Caenorhabditis elegans).